A 149-amino-acid chain; its full sequence is Leghemoglobin (149 aa).

The Globin domain maps to 3-147 (AFSEKQESLV…LAAAIKKAMG (145 aa)). At Y31 the chain carries Nitrated tyrosine. Residue S46 coordinates heme b. Residue S46 is modified to Phosphoserine. An O2-binding site is contributed by H62. Heme b is bound by residues K65, H94, and K97. A Nitrated tyrosine modification is found at Y135.

Belongs to the plant globin family. As to quaternary structure, monomer. Post-translationally, nitrated in effective nodules and particularly in hypoxic conditions; this mechanism may play a protective role in the symbiosis by buffering toxic peroxynitrite NO(2)(-). Nitration level decrease during nodule senescence. Phosphorylation at Ser-46 disrupts the molecular environment of its porphyrin ring oxygen binding pocket, thus leading to a reduced oxygen consumption and to the delivery of oxygen O(2) to symbiosomes. As to expression, root nodules.

The protein localises to the cytoplasm. Its subcellular location is the cytosol. The protein resides in the nucleus. In terms of biological role, leghemoglobin that reversibly binds oxygen O(2) through a pentacoordinated heme iron. In root nodules, facilitates the diffusion of oxygen to the bacteroids while preventing the bacterial nitrogenase from being inactivated by buffering dioxygen, nitric oxide and carbon monoxide, and promoting the formation of reactive oxygen species (ROS, e.g. H(2)O(2)). This role is essential for symbiotic nitrogen fixation (SNF). The polypeptide is Leghemoglobin (Canavalia lineata (Beach bean)).